Reading from the N-terminus, the 393-residue chain is LL-diaminopimelate aminotransferase (393 aa).

Substrate contacts are provided by Y14 and G41. Residues Y71, 104 to 105 (AK), Y128, N174, Y205, and 233 to 235 (SFS) each bind pyridoxal 5'-phosphate. Substrate-binding residues include K105, Y128, and N174. K236 is modified (N6-(pyridoxal phosphate)lysine). 2 residues coordinate pyridoxal 5'-phosphate: R244 and N275. Residues N275 and R369 each contribute to the substrate site.

Belongs to the class-I pyridoxal-phosphate-dependent aminotransferase family. LL-diaminopimelate aminotransferase subfamily. In terms of assembly, homodimer. Pyridoxal 5'-phosphate serves as cofactor.

It carries out the reaction (2S,6S)-2,6-diaminopimelate + 2-oxoglutarate = (S)-2,3,4,5-tetrahydrodipicolinate + L-glutamate + H2O + H(+). It participates in amino-acid biosynthesis; L-lysine biosynthesis via DAP pathway; LL-2,6-diaminopimelate from (S)-tetrahydrodipicolinate (aminotransferase route): step 1/1. In terms of biological role, involved in the synthesis of meso-diaminopimelate (m-DAP or DL-DAP), required for both lysine and peptidoglycan biosynthesis. Catalyzes the direct conversion of tetrahydrodipicolinate to LL-diaminopimelate. This chain is LL-diaminopimelate aminotransferase, found in Chlamydia muridarum (strain MoPn / Nigg).